Here is a 225-residue protein sequence, read N- to C-terminus: Probable GTP-binding protein EngB (225 aa).

The region spanning 40–224 is the EngB-type G domain; it reads GPPEVAFAGR…RAAIVHAVTA (185 aa). GTP contacts are provided by residues 48–55, 75–79, 102–105, 169–172, and 203–205; these read GRSNVGKS, GRTQE, DMPG, TKAD, and TSS. S55 and T77 together coordinate Mg(2+).

Belongs to the TRAFAC class TrmE-Era-EngA-EngB-Septin-like GTPase superfamily. EngB GTPase family. Mg(2+) is required as a cofactor.

In terms of biological role, necessary for normal cell division and for the maintenance of normal septation. This Chelativorans sp. (strain BNC1) protein is Probable GTP-binding protein EngB.